A 481-amino-acid chain; its full sequence is Aspartyl/glutamyl-tRNA(Asn/Gln) amidotransferase subunit B (481 aa).

This sequence belongs to the GatB/GatE family. GatB subfamily. Heterotrimer of A, B and C subunits.

It carries out the reaction L-glutamyl-tRNA(Gln) + L-glutamine + ATP + H2O = L-glutaminyl-tRNA(Gln) + L-glutamate + ADP + phosphate + H(+). It catalyses the reaction L-aspartyl-tRNA(Asn) + L-glutamine + ATP + H2O = L-asparaginyl-tRNA(Asn) + L-glutamate + ADP + phosphate + 2 H(+). Allows the formation of correctly charged Asn-tRNA(Asn) or Gln-tRNA(Gln) through the transamidation of misacylated Asp-tRNA(Asn) or Glu-tRNA(Gln) in organisms which lack either or both of asparaginyl-tRNA or glutaminyl-tRNA synthetases. The reaction takes place in the presence of glutamine and ATP through an activated phospho-Asp-tRNA(Asn) or phospho-Glu-tRNA(Gln). The chain is Aspartyl/glutamyl-tRNA(Asn/Gln) amidotransferase subunit B from Marinomonas sp. (strain MWYL1).